Reading from the N-terminus, the 155-residue chain is UPF0178 protein RHE_CH02229 (155 aa).

The protein belongs to the UPF0178 family.

The polypeptide is UPF0178 protein RHE_CH02229 (Rhizobium etli (strain ATCC 51251 / DSM 11541 / JCM 21823 / NBRC 15573 / CFN 42)).